The following is a 206-amino-acid chain: Urease accessory protein UreG (206 aa).

11 to 18 (GPVGAGKT) provides a ligand contact to GTP.

Belongs to the SIMIBI class G3E GTPase family. UreG subfamily. In terms of assembly, homodimer. UreD, UreF and UreG form a complex that acts as a GTP-hydrolysis-dependent molecular chaperone, activating the urease apoprotein by helping to assemble the nickel containing metallocenter of UreC. The UreE protein probably delivers the nickel.

Its subcellular location is the cytoplasm. Its function is as follows. Facilitates the functional incorporation of the urease nickel metallocenter. This process requires GTP hydrolysis, probably effectuated by UreG. In Ureaplasma parvum serovar 3 (strain ATCC 700970), this protein is Urease accessory protein UreG.